The sequence spans 239 residues: Ribonuclease PH (239 aa).

Phosphate contacts are provided by residues R86 and 124 to 126 (GTR).

Belongs to the RNase PH family. As to quaternary structure, homohexameric ring arranged as a trimer of dimers.

It catalyses the reaction tRNA(n+1) + phosphate = tRNA(n) + a ribonucleoside 5'-diphosphate. Functionally, phosphorolytic 3'-5' exoribonuclease that plays an important role in tRNA 3'-end maturation. Removes nucleotide residues following the 3'-CCA terminus of tRNAs; can also add nucleotides to the ends of RNA molecules by using nucleoside diphosphates as substrates, but this may not be physiologically important. Probably plays a role in initiation of 16S rRNA degradation (leading to ribosome degradation) during starvation. The polypeptide is Ribonuclease PH (Rhizobium etli (strain CIAT 652)).